The primary structure comprises 350 residues: (RS)-norcoclaurine 6-O-methyltransferase (350 aa).

An S-adenosyl-L-methionine-binding site is contributed by M166. D169 contacts substrate. Residues T170, G195, D218, 238–239 (DM), and K252 contribute to the S-adenosyl-L-methionine site. Substrate contacts are provided by residues 253–257 (CILHD) and D306. H256 functions as the Proton acceptor in the catalytic mechanism.

The protein belongs to the class I-like SAM-binding methyltransferase superfamily. Cation-independent O-methyltransferase family. COMT subfamily. In terms of assembly, homodimer. As to expression, expressed in leaf primordia of rhizomes and root endodermis.

It carries out the reaction (S)-norcoclaurine + S-adenosyl-L-methionine = (S)-coclaurine + S-adenosyl-L-homocysteine + H(+). The enzyme catalyses norcoclaurine + S-adenosyl-L-methionine = coclaurine + S-adenosyl-L-homocysteine + H(+). With respect to regulation, inhibited by sanguinarine. Involved in the biosynthesis of coclaurine, a precursor of benzylisoquinoline alkaloids. Catalyzes the transfer of the S-methyl group of S-adenosyl-L-methionine (AdoMet) to the 6-hydroxyl group of norcoclaurine to form coclaurine. This Thalictrum flavum subsp. glaucum (Yellow meadow rue) protein is (RS)-norcoclaurine 6-O-methyltransferase.